The primary structure comprises 156 residues: ATP synthase subunit b (156 aa).

The helical transmembrane segment at 12 to 32 threads the bilayer; that stretch reads VAFFIFVLFCMKFVWPPVIAA.

Belongs to the ATPase B chain family. As to quaternary structure, F-type ATPases have 2 components, F(1) - the catalytic core - and F(0) - the membrane proton channel. F(1) has five subunits: alpha(3), beta(3), gamma(1), delta(1), epsilon(1). F(0) has three main subunits: a(1), b(2) and c(10-14). The alpha and beta chains form an alternating ring which encloses part of the gamma chain. F(1) is attached to F(0) by a central stalk formed by the gamma and epsilon chains, while a peripheral stalk is formed by the delta and b chains.

Its subcellular location is the cell inner membrane. In terms of biological role, f(1)F(0) ATP synthase produces ATP from ADP in the presence of a proton or sodium gradient. F-type ATPases consist of two structural domains, F(1) containing the extramembraneous catalytic core and F(0) containing the membrane proton channel, linked together by a central stalk and a peripheral stalk. During catalysis, ATP synthesis in the catalytic domain of F(1) is coupled via a rotary mechanism of the central stalk subunits to proton translocation. Component of the F(0) channel, it forms part of the peripheral stalk, linking F(1) to F(0). This is ATP synthase subunit b from Pseudomonas paraeruginosa (strain DSM 24068 / PA7) (Pseudomonas aeruginosa (strain PA7)).